The chain runs to 368 residues: Chaperone protein DnaJ (368 aa).

The region spanning 5–69 is the J domain; the sequence is DYYEVLGVAR…NQRARYDQFG (65 aa). The CR-type zinc-finger motif lies at 125–207; the sequence is GVEKVITIPV…CRGAGRVRKN (83 aa). Zn(2+) contacts are provided by C138, C141, C155, C158, C181, C184, C195, and C198. CXXCXGXG motif repeat units follow at residues 138-145, 155-162, 181-188, and 195-202; these read CGTCHGSG, CKRCGGSG, CSTCHGRG, and CETCRGAG.

The protein belongs to the DnaJ family. In terms of assembly, homodimer. Zn(2+) is required as a cofactor.

Its subcellular location is the cytoplasm. Functionally, participates actively in the response to hyperosmotic and heat shock by preventing the aggregation of stress-denatured proteins and by disaggregating proteins, also in an autonomous, DnaK-independent fashion. Unfolded proteins bind initially to DnaJ; upon interaction with the DnaJ-bound protein, DnaK hydrolyzes its bound ATP, resulting in the formation of a stable complex. GrpE releases ADP from DnaK; ATP binding to DnaK triggers the release of the substrate protein, thus completing the reaction cycle. Several rounds of ATP-dependent interactions between DnaJ, DnaK and GrpE are required for fully efficient folding. Also involved, together with DnaK and GrpE, in the DNA replication of plasmids through activation of initiation proteins. In Exiguobacterium sibiricum (strain DSM 17290 / CCUG 55495 / CIP 109462 / JCM 13490 / 255-15), this protein is Chaperone protein DnaJ.